Consider the following 60-residue polypeptide: Light-harvesting polypeptide B-885 alpha-2 chain (60 aa).

Residues 1–16 (SAPAQWKLWLVMDPRT) lie on the Cytoplasmic side of the membrane. The helical transmembrane segment at 17 to 37 (VMIGTAAWLGVLALLIHFLLL) threads the bilayer. His-33 is a binding site for a bacteriochlorophyll. The Periplasmic portion of the chain corresponds to 38 to 60 (GTERFNWIDTGLKEQKATAAAQA).

Belongs to the antenna complex alpha subunit family. The core complex is formed by different alpha and beta chains, binding bacteriochlorophyll molecules, and arranged most probably in tetrameric structures disposed around the reaction center. The non-pigmented gamma chains may constitute additional components.

The protein localises to the cell inner membrane. Antenna complexes are light-harvesting systems, which transfer the excitation energy to the reaction centers. The sequence is that of Light-harvesting polypeptide B-885 alpha-2 chain from Rhodocyclus tenuis (Rhodospirillum tenue).